A 134-amino-acid polypeptide reads, in one-letter code: Small ribosomal subunit protein uS9 (134 aa).

A disordered region spans residues 114–134 (EVERKKYGLKKARRAPQFSKR). A compositionally biased stretch (basic residues) spans 120–134 (YGLKKARRAPQFSKR).

Belongs to the universal ribosomal protein uS9 family.

This chain is Small ribosomal subunit protein uS9, found in Thermotoga sp. (strain RQ2).